Consider the following 304-residue polypeptide: Ornithine carbamoyltransferase (304 aa).

Residues 51–54, Q78, R102, and 129–132 contribute to the carbamoyl phosphate site; these read STRT and HPVQ. L-ornithine-binding positions include N157, D221, and 225–226; that span reads SM. Residues 261–262 and R289 contribute to the carbamoyl phosphate site; that span reads CL.

The protein belongs to the aspartate/ornithine carbamoyltransferase superfamily. OTCase family.

The protein localises to the cytoplasm. The catalysed reaction is carbamoyl phosphate + L-ornithine = L-citrulline + phosphate + H(+). Its pathway is amino-acid degradation; L-arginine degradation via ADI pathway; carbamoyl phosphate from L-arginine: step 2/2. In terms of biological role, reversibly catalyzes the transfer of the carbamoyl group from carbamoyl phosphate (CP) to the N(epsilon) atom of ornithine (ORN) to produce L-citrulline. This Campylobacter curvus (strain 525.92) protein is Ornithine carbamoyltransferase.